Reading from the N-terminus, the 1005-residue chain is Sorbin and SH3 domain-containing protein 1 homolog (1005 aa).

7 disordered regions span residues 1–31, 61–86, 99–153, 243–292, 386–409, 427–475, and 542–622; these read MMHHPHPFGSNLANSSEPQQPSGQYLNPAAD, LDMKTPTGNSSRYQKPAPPPVDSTPS, YVDP…PHSA, NELK…FNSE, FEEKQNRSPMTSTPSYKEQGFKND, TTKN…TAAA, and MHRK…SNEE. The segment covering 11 to 25 has biased composition (polar residues); the sequence is NLANSSEPQQPSGQY. The span at 260 to 269 shows a compositional bias: polar residues; that stretch reads VMTSSTENLK. A compositionally biased stretch (low complexity) spans 270–279; the sequence is NGNNQQNQQP. The span at 392–409 shows a compositional bias: polar residues; sequence RSPMTSTPSYKEQGFKND. Low complexity predominate over residues 448–475; sequence SDTYPVSSSTTSTWPSHTTTPTTTTAAA. The SoHo domain occupies 499–567; sequence VMSTNMDEPI…FINPSNVTDG (69 aa). Residues 544–557 show a composition bias toward basic and acidic residues; that stretch reads RKGEDGSNEGKEQH. Residues 559–589 are compositionally biased toward polar residues; sequence INPSNVTDGIGRTTPTASNLGRSRENLSFNQ. Residues 610-642 are a coiled coil; it reads YNNQERVKQSNEEELLRLKAEKLAEELRKEKER. SH3 domains follow at residues 683–742, 745–805, and 946–1005; these read QPVM…INTG, GDSQ…PIEQ, and KGSE…VKRH.

As to quaternary structure, may interact with deb-1. As to expression, expressed in body wall muscles, muscle arm attachment sites at the nerve ring, all non-striated muscles, and distal tip cells of the gonad. Highly expressed in the origins and insertions of the vulval and anal depressor muscles and the spicule-associated and diagonal muscles of the male tail. Expressed in small puncta throughout the uterus, stomatointestinal muscle and proximal gonadal sheath tissues. Not expressed in the pharynx.

The protein localises to the cell junction. The protein resides in the adherens junction. Its subcellular location is the cell membrane. It localises to the focal adhesion. In terms of biological role, required for organization of sarcomeres in body wall muscles and for maintaining normal mitochondrial position in myocytes. This Caenorhabditis elegans protein is Sorbin and SH3 domain-containing protein 1 homolog.